Reading from the N-terminus, the 453-residue chain is tRNA modification GTPase MnmE (453 aa).

Positions 22, 79, and 119 each coordinate (6S)-5-formyl-5,6,7,8-tetrahydrofolate. In terms of domain architecture, TrmE-type G spans 215–376; sequence GMKVVIAGRP…LRNHLKECMG (162 aa). K(+) is bound at residue Asn225. GTP-binding positions include 225–230, 244–250, 269–272, and 334–337; these read NAGKSS, TDIAGTT, DTAG, and NKAD. Ser229 serves as a coordination point for Mg(2+). Residues Thr244, Ile246, and Thr249 each contribute to the K(+) site. Position 250 (Thr250) interacts with Mg(2+). Position 453 (Lys453) interacts with (6S)-5-formyl-5,6,7,8-tetrahydrofolate.

This sequence belongs to the TRAFAC class TrmE-Era-EngA-EngB-Septin-like GTPase superfamily. TrmE GTPase family. Homodimer. Heterotetramer of two MnmE and two MnmG subunits. It depends on K(+) as a cofactor.

Its subcellular location is the cytoplasm. Its function is as follows. Exhibits a very high intrinsic GTPase hydrolysis rate. Involved in the addition of a carboxymethylaminomethyl (cmnm) group at the wobble position (U34) of certain tRNAs, forming tRNA-cmnm(5)s(2)U34. The protein is tRNA modification GTPase MnmE of Vibrio parahaemolyticus serotype O3:K6 (strain RIMD 2210633).